Consider the following 556-residue polypeptide: Neurofilament light polypeptide (556 aa).

Serine 2 bears the N-acetylserine mark. The tract at residues 2 to 94 is head; sequence SSYGYDPFFP…KSIRSQERAQ (93 aa). Residues 91 to 402 form the IF rod domain; it reads ERAQLQDLND…KLLEGEETRL (312 aa). The segment at 95–126 is coil 1A; that stretch reads LQDLNDRFACFIERVHELEQQNKVLEAELLVL. The segment at 127-139 is linker 1; sequence RQKHAEPSRFRAL. The segment at 140 to 235 is coil 1B; it reads YEQEIRELRL…KVHEEELAEL (96 aa). Positions 236-254 are linker 12; that stretch reads QAQIQYAHLSVEMDVSAKP. The segment at 255–273 is coil 2A; sequence DLSAALRDIRAQYEKLAAR. The segment at 274–282 is linker 2; the sequence is NMQNAEEWF. The coil 2B stretch occupies residues 283–398; it reads RSRFTVLSES…AAYRKLLEGE (116 aa). The tract at residues 399–445 is tail, subdomain A; it reads ETRLSFTSVGSITSGYTQTAPTFGRSAYSGLQSTSYLMTTRSFPTYY. The segment at 399–556 is tail; it reads ETRLSFTSVG…KEETEVKKKA (158 aa). Positions 446 to 556 are tail, subdomain B (acidic); sequence SSHVQEEQIE…KEETEVKKKA (111 aa). Over residues 464 to 473 the composition is skewed to low complexity; that stretch reads KAGEAKAAPA. The segment at 464–556 is disordered; that stretch reads KAGEAKAAPA…KEETEVKKKA (93 aa). Positions 474–540 are enriched in acidic residues; the sequence is EEGEEEEKEE…AEETGEEEKE (67 aa). Over residues 541–556 the composition is skewed to basic and acidic residues; it reads EKEAAGKEETEVKKKA.

The protein belongs to the intermediate filament family. In terms of assembly, forms homodimers (in vitro).

It is found in the cell projection. Its subcellular location is the axon. The protein localises to the cytoplasm. The protein resides in the cytoskeleton. Neurofilaments usually contain three intermediate filament proteins: NEFL, NEFM, and NEFH which are involved in the maintenance of neuronal caliber. May additionally cooperate with the neuronal intermediate filament proteins to form neuronal filamentous networks. The polypeptide is Neurofilament light polypeptide (NEFL) (Coturnix japonica (Japanese quail)).